Reading from the N-terminus, the 591-residue chain is L-fucose isomerase (591 aa).

Catalysis depends on proton acceptor residues glutamate 337 and aspartate 361. 3 residues coordinate Mn(2+): glutamate 337, aspartate 361, and histidine 528.

It belongs to the L-fucose isomerase family. As to quaternary structure, homohexamer. Mn(2+) serves as cofactor.

The protein localises to the cytoplasm. The catalysed reaction is L-fucose = L-fuculose. The protein operates within carbohydrate degradation; L-fucose degradation; L-lactaldehyde and glycerone phosphate from L-fucose: step 1/3. Converts the aldose L-fucose into the corresponding ketose L-fuculose. In Escherichia coli (strain ATCC 8739 / DSM 1576 / NBRC 3972 / NCIMB 8545 / WDCM 00012 / Crooks), this protein is L-fucose isomerase.